We begin with the raw amino-acid sequence, 194 residues long: Outer-membrane lipoprotein LolB (194 aa).

A signal peptide spans 1 to 18; sequence MTLLLRLFTLGCLLLLAG. Residue Cys19 is the site of N-palmitoyl cysteine attachment. A lipid anchor (S-diacylglycerol cysteine) is attached at Cys19.

Belongs to the LolB family. As to quaternary structure, monomer.

The protein localises to the cell outer membrane. Its function is as follows. Plays a critical role in the incorporation of lipoproteins in the outer membrane after they are released by the LolA protein. This chain is Outer-membrane lipoprotein LolB, found in Aeromonas hydrophila subsp. hydrophila (strain ATCC 7966 / DSM 30187 / BCRC 13018 / CCUG 14551 / JCM 1027 / KCTC 2358 / NCIMB 9240 / NCTC 8049).